We begin with the raw amino-acid sequence, 239 residues long: Purine nucleoside phosphorylase DeoD-type (239 aa).

Residue histidine 5 coordinates a purine D-ribonucleoside. Residues glycine 21, arginine 25, arginine 44, and 88–91 (RVGS) contribute to the phosphate site. Residues 180 to 182 (EME) and 204 to 205 (SD) each bind a purine D-ribonucleoside. The Proton donor role is filled by aspartate 205.

The protein belongs to the PNP/UDP phosphorylase family. As to quaternary structure, homohexamer; trimer of homodimers.

It carries out the reaction a purine D-ribonucleoside + phosphate = a purine nucleobase + alpha-D-ribose 1-phosphate. The catalysed reaction is a purine 2'-deoxy-D-ribonucleoside + phosphate = a purine nucleobase + 2-deoxy-alpha-D-ribose 1-phosphate. Functionally, catalyzes the reversible phosphorolytic breakdown of the N-glycosidic bond in the beta-(deoxy)ribonucleoside molecules, with the formation of the corresponding free purine bases and pentose-1-phosphate. The polypeptide is Purine nucleoside phosphorylase DeoD-type (Yersinia pestis bv. Antiqua (strain Antiqua)).